Reading from the N-terminus, the 607-residue chain is Elongation factor 4 (607 aa).

In terms of domain architecture, tr-type G spans 11-193 (EKIRNFSIIA…QIVEKVPAPT (183 aa)). GTP is bound by residues 23-28 (DHGKST) and 140-143 (NKID).

Belongs to the TRAFAC class translation factor GTPase superfamily. Classic translation factor GTPase family. LepA subfamily.

The protein localises to the cell membrane. The catalysed reaction is GTP + H2O = GDP + phosphate + H(+). Required for accurate and efficient protein synthesis under certain stress conditions. May act as a fidelity factor of the translation reaction, by catalyzing a one-codon backward translocation of tRNAs on improperly translocated ribosomes. Back-translocation proceeds from a post-translocation (POST) complex to a pre-translocation (PRE) complex, thus giving elongation factor G a second chance to translocate the tRNAs correctly. Binds to ribosomes in a GTP-dependent manner. This Streptococcus pneumoniae (strain P1031) protein is Elongation factor 4.